Consider the following 675-residue polypeptide: Cysteine-rich receptor-like protein kinase 25 (675 aa).

A signal peptide spans 1–25 (MSSCFKSSVSLFSVFLFMILKTVTS). Residues 26-281 (DPTYLYHICP…IPSEKGKGKN (256 aa)) lie on the Extracellular side of the membrane. Gnk2-homologous domains follow at residues 28–134 (TYLY…NQSI) and 140–247 (IRPG…LYPF). 10 N-linked (GlcNAc...) asparagine glycosylation sites follow: Asn36, Asn43, Asn77, Asn106, Asn131, Asn151, Asn161, Asn188, Asn249, and Asn281. Residues 282–302 (LTVIVTAIAVPVSVCVLLLGA) traverse the membrane as a helical segment. The Cytoplasmic segment spans residues 303 to 675 (MCWLLARRRN…DSSITIVYPR (373 aa)). In terms of domain architecture, Protein kinase spans 347 to 622 (FSESNKLGHG…DILVMMNSFT (276 aa)). Residues 353 to 361 (LGHGGFGEV) and Lys375 contribute to the ATP site. Residue Tyr420 is modified to Phosphotyrosine. Residue Asp472 is the Proton acceptor of the active site. Ser476 is modified (phosphoserine). Phosphothreonine is present on Thr512. Tyr520 is subject to Phosphotyrosine. Residues 638–661 (MKDSRDPRSGGSASDHSATSKSLP) are disordered. Positions 648–661 (GSASDHSATSKSLP) are enriched in polar residues.

The protein belongs to the protein kinase superfamily. Ser/Thr protein kinase family. CRK subfamily.

It localises to the membrane. It catalyses the reaction L-seryl-[protein] + ATP = O-phospho-L-seryl-[protein] + ADP + H(+). The catalysed reaction is L-threonyl-[protein] + ATP = O-phospho-L-threonyl-[protein] + ADP + H(+). This is Cysteine-rich receptor-like protein kinase 25 (CRK25) from Arabidopsis thaliana (Mouse-ear cress).